The sequence spans 217 residues: Probable D-methionine transport system permease protein MetI (217 aa).

The ABC transmembrane type-1 domain maps to 13–207; it reads TLETLYMGFI…LIVMLSQKLG (195 aa). 5 helical membrane passes run 20 to 40, 58 to 78, 81 to 101, 143 to 163, and 184 to 204; these read GFIA…LAFL, VIIN…LLPF, LVVG…VSAI, IPIL…YSAM, and NMIY…MLSQ.

The protein belongs to the binding-protein-dependent transport system permease family. CysTW subfamily.

The protein resides in the cell inner membrane. Its function is as follows. Part of the binding-protein-dependent transport system for D-methionine. Probably responsible for the translocation of the substrate across the membrane. The protein is Probable D-methionine transport system permease protein MetI (metI) of Pasteurella multocida (strain Pm70).